Here is a 183-residue protein sequence, read N- to C-terminus: Mid1-interacting protein 1 (183 aa).

Methionine 1 is modified (N-acetylmethionine). Phosphoserine is present on residues serine 75 and serine 79.

It belongs to the SPOT14 family. As to quaternary structure, homodimer in the absence of THRSP. Heterodimer with THRSP. The homodimer interacts with ACACA and ACACB. Promotes polymerization of Acetyl-CoA carboxylase to form complexes that contain MID1IP1 and ACACA and/or ACACB. Interaction with THRSP interferes with ACACA binding.

It is found in the nucleus. Its subcellular location is the cytoplasm. The protein resides in the cytoskeleton. Functionally, plays a role in the regulation of lipogenesis in liver. Up-regulates ACACA enzyme activity. Required for efficient lipid biosynthesis, including triacylglycerol, diacylglycerol and phospholipid. Involved in stabilization of microtubules. The chain is Mid1-interacting protein 1 (MID1IP1) from Homo sapiens (Human).